A 166-amino-acid chain; its full sequence is RNA pyrophosphohydrolase (166 aa).

Residues 8 to 158 (PYRSCVGMML…KRPVYERVVK (151 aa)) enclose the Nudix hydrolase domain. Residues 47–68 (GGIDPGEDYWEAAQRELLEETN) carry the Nudix box motif.

The protein belongs to the Nudix hydrolase family. RppH subfamily. A divalent metal cation is required as a cofactor.

Its function is as follows. Accelerates the degradation of transcripts by removing pyrophosphate from the 5'-end of triphosphorylated RNA, leading to a more labile monophosphorylated state that can stimulate subsequent ribonuclease cleavage. In Afipia carboxidovorans (strain ATCC 49405 / DSM 1227 / KCTC 32145 / OM5) (Oligotropha carboxidovorans), this protein is RNA pyrophosphohydrolase.